The following is a 264-amino-acid chain: Glutamate racemase (264 aa).

Residues 10–11 (DS) and 42–43 (YG) each bind substrate. Catalysis depends on cysteine 73, which acts as the Proton donor/acceptor. Residue 74–75 (NT) coordinates substrate. The active-site Proton donor/acceptor is the cysteine 183. 184–185 (TH) serves as a coordination point for substrate.

It belongs to the aspartate/glutamate racemases family.

The enzyme catalyses L-glutamate = D-glutamate. It participates in cell wall biogenesis; peptidoglycan biosynthesis. Provides the (R)-glutamate required for cell wall biosynthesis. In Streptococcus pyogenes serotype M4 (strain MGAS10750), this protein is Glutamate racemase.